We begin with the raw amino-acid sequence, 259 residues long: Pyridoxine 5'-phosphate synthase (259 aa).

3-amino-2-oxopropyl phosphate is bound at residue Asn-6. A 1-deoxy-D-xylulose 5-phosphate-binding site is contributed by 8–9 (DH). Arg-17 provides a ligand contact to 3-amino-2-oxopropyl phosphate. The active-site Proton acceptor is His-42. 1-deoxy-D-xylulose 5-phosphate-binding residues include Arg-44 and His-49. Glu-69 acts as the Proton acceptor in catalysis. Residue Thr-99 coordinates 1-deoxy-D-xylulose 5-phosphate. The Proton donor role is filled by His-212. 3-amino-2-oxopropyl phosphate is bound by residues Gly-213 and 234–235 (GH).

This sequence belongs to the PNP synthase family. Homooctamer; tetramer of dimers.

The protein resides in the cytoplasm. It carries out the reaction 3-amino-2-oxopropyl phosphate + 1-deoxy-D-xylulose 5-phosphate = pyridoxine 5'-phosphate + phosphate + 2 H2O + H(+). It participates in cofactor biosynthesis; pyridoxine 5'-phosphate biosynthesis; pyridoxine 5'-phosphate from D-erythrose 4-phosphate: step 5/5. Its function is as follows. Catalyzes the complicated ring closure reaction between the two acyclic compounds 1-deoxy-D-xylulose-5-phosphate (DXP) and 3-amino-2-oxopropyl phosphate (1-amino-acetone-3-phosphate or AAP) to form pyridoxine 5'-phosphate (PNP) and inorganic phosphate. In Nautilia profundicola (strain ATCC BAA-1463 / DSM 18972 / AmH), this protein is Pyridoxine 5'-phosphate synthase.